The chain runs to 96 residues: Conantokin Rl-B (96 aa).

Residues 1–21 (MQLYTYLYLLVPLVTFHLILG) form the signal peptide. The propeptide occupies 22 to 78 (TGTLDHGDALTERRSTDATALKPEPVLLQKSSARSTNDNGKDTQMKRILKKRGNKAR). The segment at 51–96 (KSSARSTNDNGKDTQMKRILKKRGNKARGEEELAEKAPEFARELAN) is disordered. Residues 77 to 96 (ARGEEELAEKAPEFARELAN) are compositionally biased toward basic and acidic residues. Glu81 lines the a divalent metal cation pocket. Glu81, Glu82, and Glu85 each carry 4-carboxyglutamate. Glu85 provides a ligand contact to a divalent metal cation. 4-hydroxyproline is present on Pro88. 2 residues coordinate a divalent metal cation: Glu89 and Glu93. 4-carboxyglutamate occurs at positions 89 and 93. An Asparagine amide modification is found at Asn96.

Belongs to the conotoxin B superfamily. The cofactor is Ca(2+). Mg(2+) is required as a cofactor. In terms of processing, hydroxylation of Pro-88 is important for NR2B/GRIN2B NMDA receptor selectivity. Removal of hydroxylation does not change global NMDA receptor antagonism (tested on WT neurons), but it decreases the inhibitory potency on NR2B/GRIN2B NMDA receptors and increases the inhibitory potency on NR2A/GRIN2A NMDA receptors. Hydroxylation of Pro-88 locally disrupts a small region of the divalent cation-induced alpha-helix but does not destabilize the entire helix. Expressed by the venom duct.

It is found in the secreted. Its function is as follows. Conantokins inhibit N-methyl-D-aspartate (NMDA) receptors. This toxin has antagonist activity on the NR2B/GRIN2B subunit (IC(50)=0.1 uM). In vivo, when delivered into the brain, is active has anticonvulsant activity in the model of epilepsy in mice. This is Conantokin Rl-B from Conus rolani (Cone snail).